The primary structure comprises 63 residues: Conotoxin TeAr193 (63 aa).

Residues M1–A22 form the signal peptide. A propeptide spanning residues Q23–S48 is cleaved from the precursor.

Belongs to the conotoxin T superfamily. Contains 2 disulfide bonds that can be either 'C1-C3, C2-C4' or 'C1-C4, C2-C3', since these disulfide connectivities have been observed for conotoxins with cysteine framework V (for examples, see AC P0DQQ7 and AC P81755). In terms of tissue distribution, expressed by the venom duct.

Its subcellular location is the secreted. The chain is Conotoxin TeAr193 from Conus textile (Cloth-of-gold cone).